The following is a 721-amino-acid chain: Catalase-peroxidase (721 aa).

A cross-link (tryptophyl-tyrosyl-methioninium (Trp-Tyr) (with M-238)) is located at residues 89–212 (WHSAGTYRTG…LAAVQMGLIY (124 aa)). The active-site Proton acceptor is the His-90. Residues 212-238 (YVNPEGPNGDPDPFAAAVDIRETFARM) constitute a cross-link (tryptophyl-tyrosyl-methioninium (Tyr-Met) (with W-89)). Residue His-253 participates in heme b binding.

It belongs to the peroxidase family. Peroxidase/catalase subfamily. Homodimer or homotetramer. Requires heme b as cofactor. Post-translationally, formation of the three residue Trp-Tyr-Met cross-link is important for the catalase, but not the peroxidase activity of the enzyme.

The enzyme catalyses H2O2 + AH2 = A + 2 H2O. It catalyses the reaction 2 H2O2 = O2 + 2 H2O. Functionally, bifunctional enzyme with both catalase and broad-spectrum peroxidase activity. In Shewanella baltica (strain OS195), this protein is Catalase-peroxidase.